Here is a 188-residue protein sequence, read N- to C-terminus: UPF0301 protein azo3459 (188 aa).

This sequence belongs to the UPF0301 (AlgH) family.

In Azoarcus sp. (strain BH72), this protein is UPF0301 protein azo3459.